Here is a 663-residue protein sequence, read N- to C-terminus: UvrABC system protein B (663 aa).

The segment covering 1 to 10 (MIDKRDDKPF) has biased composition (basic and acidic residues). The tract at residues 1 to 23 (MIDKRDDKPFKLKSKYKPSGDQP) is disordered. One can recognise a Helicase ATP-binding domain in the interval 31 to 418 (DNIEGGEKAQ…TNTIIEQIIR (388 aa)). Residue 44 to 51 (GATGTGKT) coordinates ATP. The Beta-hairpin signature appears at 97-120 (YYDYYQPEAYVPSSDTYIEKDSSV). One can recognise a Helicase C-terminal domain in the interval 435-601 (QMDDLLGEIN…TIKKDIRGLI (167 aa)). A UVR domain is found at 627 to 662 (KEAINALQKQMQEAAELLDFELAAQMRDLILELKLM).

The protein belongs to the UvrB family. As to quaternary structure, forms a heterotetramer with UvrA during the search for lesions. Interacts with UvrC in an incision complex.

The protein resides in the cytoplasm. Functionally, the UvrABC repair system catalyzes the recognition and processing of DNA lesions. A damage recognition complex composed of 2 UvrA and 2 UvrB subunits scans DNA for abnormalities. Upon binding of the UvrA(2)B(2) complex to a putative damaged site, the DNA wraps around one UvrB monomer. DNA wrap is dependent on ATP binding by UvrB and probably causes local melting of the DNA helix, facilitating insertion of UvrB beta-hairpin between the DNA strands. Then UvrB probes one DNA strand for the presence of a lesion. If a lesion is found the UvrA subunits dissociate and the UvrB-DNA preincision complex is formed. This complex is subsequently bound by UvrC and the second UvrB is released. If no lesion is found, the DNA wraps around the other UvrB subunit that will check the other stand for damage. The sequence is that of UvrABC system protein B from Streptococcus pyogenes serotype M1.